Here is a 245-residue protein sequence, read N- to C-terminus: Probable phosphatase PMI1003 (245 aa).

Positions 7, 9, 15, 40, 73, 101, 131, 192, and 194 each coordinate Zn(2+).

Belongs to the PHP family. Homotrimer. Zn(2+) is required as a cofactor.

The chain is Probable phosphatase PMI1003 from Proteus mirabilis (strain HI4320).